Here is a 217-residue protein sequence, read N- to C-terminus: Probable cytidylate kinase (217 aa).

9 to 17 (GPAGSGKST) contributes to the ATP binding site.

This sequence belongs to the cytidylate kinase family. Type 1 subfamily.

It carries out the reaction CMP + ATP = CDP + ADP. It catalyses the reaction dCMP + ATP = dCDP + ADP. The sequence is that of Probable cytidylate kinase from Vairimorpha ceranae (strain BRL01) (Microsporidian parasite).